Here is a 424-residue protein sequence, read N- to C-terminus: Histidinol dehydrogenase homolog (424 aa).

Residues Gln-250 and His-253 each contribute to the Zn(2+) site. Catalysis depends on proton acceptor residues Glu-318 and His-319. 2 residues coordinate Zn(2+): Asp-352 and His-411.

The protein belongs to the histidinol dehydrogenase family. The cofactor is Zn(2+).

The chain is Histidinol dehydrogenase homolog from Shouchella clausii (strain KSM-K16) (Alkalihalobacillus clausii).